A 309-amino-acid chain; its full sequence is 4-hydroxy-3-methylbut-2-enyl diphosphate reductase (309 aa).

C12 provides a ligand contact to [4Fe-4S] cluster. H41 and H74 together coordinate (2E)-4-hydroxy-3-methylbut-2-enyl diphosphate. H41 and H74 together coordinate dimethylallyl diphosphate. Isopentenyl diphosphate is bound by residues H41 and H74. Residue C96 coordinates [4Fe-4S] cluster. H124 provides a ligand contact to (2E)-4-hydroxy-3-methylbut-2-enyl diphosphate. Residue H124 coordinates dimethylallyl diphosphate. H124 contributes to the isopentenyl diphosphate binding site. Residue E126 is the Proton donor of the active site. (2E)-4-hydroxy-3-methylbut-2-enyl diphosphate is bound at residue T167. C197 lines the [4Fe-4S] cluster pocket. Residues S225, S226, N227, and S269 each contribute to the (2E)-4-hydroxy-3-methylbut-2-enyl diphosphate site. Positions 225, 226, 227, and 269 each coordinate dimethylallyl diphosphate. Isopentenyl diphosphate contacts are provided by S225, S226, N227, and S269.

It belongs to the IspH family. Requires [4Fe-4S] cluster as cofactor.

It catalyses the reaction isopentenyl diphosphate + 2 oxidized [2Fe-2S]-[ferredoxin] + H2O = (2E)-4-hydroxy-3-methylbut-2-enyl diphosphate + 2 reduced [2Fe-2S]-[ferredoxin] + 2 H(+). The enzyme catalyses dimethylallyl diphosphate + 2 oxidized [2Fe-2S]-[ferredoxin] + H2O = (2E)-4-hydroxy-3-methylbut-2-enyl diphosphate + 2 reduced [2Fe-2S]-[ferredoxin] + 2 H(+). The protein operates within isoprenoid biosynthesis; dimethylallyl diphosphate biosynthesis; dimethylallyl diphosphate from (2E)-4-hydroxy-3-methylbutenyl diphosphate: step 1/1. It functions in the pathway isoprenoid biosynthesis; isopentenyl diphosphate biosynthesis via DXP pathway; isopentenyl diphosphate from 1-deoxy-D-xylulose 5-phosphate: step 6/6. In terms of biological role, catalyzes the conversion of 1-hydroxy-2-methyl-2-(E)-butenyl 4-diphosphate (HMBPP) into a mixture of isopentenyl diphosphate (IPP) and dimethylallyl diphosphate (DMAPP). Acts in the terminal step of the DOXP/MEP pathway for isoprenoid precursor biosynthesis. In Shewanella pealeana (strain ATCC 700345 / ANG-SQ1), this protein is 4-hydroxy-3-methylbut-2-enyl diphosphate reductase.